The following is a 572-amino-acid chain: Phosphoglucomutase-2 (572 aa).

Residues Thr23, Arg27, 126–127 (SH), and Lys140 each bind substrate. The Phosphoserine intermediate role is filled by Ser126. A Mg(2+)-binding site is contributed by Ser126. Mg(2+) contacts are provided by Asp308, Asp310, and Asp312. Substrate-binding positions include 312–313 (DR), Thr373, 392–394 (EES), Lys405, and Arg527.

Belongs to the phosphohexose mutase family. Requires Mg(2+) as cofactor. Post-translationally, phosphorylated via a calcium-dependent protein kinase.

The protein resides in the cytoplasm. The enzyme catalyses alpha-D-glucose 1-phosphate = alpha-D-glucose 6-phosphate. Its function is as follows. May be involved in membrane fusion in exocytosis. This chain is Phosphoglucomutase-2 (pp63-2), found in Paramecium tetraurelia.